A 541-amino-acid chain; its full sequence is Testis-specific chromodomain protein Y 2 (541 aa).

A Chromo domain is found at 6–66; it reads FEVEAIVDKR…RQTEKQKKLT (61 aa). The segment at 72-104 is disordered; that stretch reads RIFSNNARRRTSRSTKANYSKNSPKTPVTDKHH. The span at 87–97 shows a compositional bias: polar residues; sequence KANYSKNSPKT.

Testis specific.

The protein localises to the nucleus. It carries out the reaction L-lysyl-[protein] + acetyl-CoA = N(6)-acetyl-L-lysyl-[protein] + CoA + H(+). May have histone acetyltransferase activity. The protein is Testis-specific chromodomain protein Y 2 (CDY2A) of Homo sapiens (Human).